We begin with the raw amino-acid sequence, 340 residues long: Branched-chain-amino-acid aminotransferase (340 aa).

The residue at position 187 (K187) is an N6-(pyridoxal phosphate)lysine.

The protein belongs to the class-IV pyridoxal-phosphate-dependent aminotransferase family. The cofactor is pyridoxal 5'-phosphate.

The catalysed reaction is L-leucine + 2-oxoglutarate = 4-methyl-2-oxopentanoate + L-glutamate. It carries out the reaction L-isoleucine + 2-oxoglutarate = (S)-3-methyl-2-oxopentanoate + L-glutamate. The enzyme catalyses L-valine + 2-oxoglutarate = 3-methyl-2-oxobutanoate + L-glutamate. Its pathway is amino-acid biosynthesis; L-isoleucine biosynthesis; L-isoleucine from 2-oxobutanoate: step 4/4. The protein operates within amino-acid biosynthesis; L-leucine biosynthesis; L-leucine from 3-methyl-2-oxobutanoate: step 4/4. It functions in the pathway amino-acid biosynthesis; L-valine biosynthesis; L-valine from pyruvate: step 4/4. Acts on leucine, isoleucine and valine. This chain is Branched-chain-amino-acid aminotransferase (ilvE), found in Helicobacter pylori (strain J99 / ATCC 700824) (Campylobacter pylori J99).